The following is an 82-amino-acid chain: ATP synthase subunit c, chloroplastic (82 aa).

A run of 2 helical transmembrane segments spans residues 3–23 and 57–77; these read PIIS…AAIG and LAFM…LLFA.

It belongs to the ATPase C chain family. As to quaternary structure, F-type ATPases have 2 components, F(1) - the catalytic core - and F(0) - the membrane proton channel. F(1) has five subunits: alpha(3), beta(3), gamma(1), delta(1), epsilon(1). F(0) has four main subunits: a(1), b(1), b'(1) and c(10-14). The alpha and beta chains form an alternating ring which encloses part of the gamma chain. F(1) is attached to F(0) by a central stalk formed by the gamma and epsilon chains, while a peripheral stalk is formed by the delta, b and b' chains.

The protein resides in the plastid. The protein localises to the chloroplast thylakoid membrane. Functionally, f(1)F(0) ATP synthase produces ATP from ADP in the presence of a proton or sodium gradient. F-type ATPases consist of two structural domains, F(1) containing the extramembraneous catalytic core and F(0) containing the membrane proton channel, linked together by a central stalk and a peripheral stalk. During catalysis, ATP synthesis in the catalytic domain of F(1) is coupled via a rotary mechanism of the central stalk subunits to proton translocation. Key component of the F(0) channel; it plays a direct role in translocation across the membrane. A homomeric c-ring of between 10-14 subunits forms the central stalk rotor element with the F(1) delta and epsilon subunits. The sequence is that of ATP synthase subunit c, chloroplastic from Cyanidium caldarium (Red alga).